The primary structure comprises 352 residues: Biotin synthase (352 aa).

Positions 44 to 262 (NRVQVSTLLS…LAVARILMPK (219 aa)) constitute a Radical SAM core domain. [4Fe-4S] cluster-binding residues include C59, C63, and C66. C103, C134, C194, and R266 together coordinate [2Fe-2S] cluster.

It belongs to the radical SAM superfamily. Biotin synthase family. Homodimer. It depends on [4Fe-4S] cluster as a cofactor. [2Fe-2S] cluster is required as a cofactor.

It carries out the reaction (4R,5S)-dethiobiotin + (sulfur carrier)-SH + 2 reduced [2Fe-2S]-[ferredoxin] + 2 S-adenosyl-L-methionine = (sulfur carrier)-H + biotin + 2 5'-deoxyadenosine + 2 L-methionine + 2 oxidized [2Fe-2S]-[ferredoxin]. It functions in the pathway cofactor biosynthesis; biotin biosynthesis; biotin from 7,8-diaminononanoate: step 2/2. Functionally, catalyzes the conversion of dethiobiotin (DTB) to biotin by the insertion of a sulfur atom into dethiobiotin via a radical-based mechanism. The protein is Biotin synthase of Pseudomonas syringae pv. syringae (strain B728a).